A 39-amino-acid polypeptide reads, in one-letter code: Bomanin Short 3 (39 aa).

A signal peptide spans 1–18 (MKFLSLAFVLGLLALANA). A propeptide spanning residues 19-23 (TPLNP) is cleaved from the precursor. C32 and C35 are disulfide-bonded.

Belongs to the bomanin family. As to expression, hemolymph (at protein level).

The protein resides in the secreted. Secreted immune-induced peptide induced by Toll signaling. Has a role in resistance bacterial and fungal infections. The strength of antimicrobial activity appears to correlate with the overall level of expression. Has no activity against the fungus C.glabrata in vitro. This chain is Bomanin Short 3, found in Drosophila melanogaster (Fruit fly).